A 315-amino-acid polypeptide reads, in one-letter code: MSQPTVYIDGDQGTTGLLIHERLRGRIDLQLVTLPDAERKDPVRRAEAINAADIAILCLPDAAAREAVGFIRNPAVRVIDASSAHRTQPDWVYGFPEMANGHAQTIAHARRVTNPGCYPTGAIALLRPLQQAGLLPRDYPVSIHAVSGYSGGGRAAVDAFESGDASQAKPLQVYGLALAHKHVPEIQLHAGLTNRPMFVPAYGAYRQGIVLTVPIELRLLPAGVTGEQLHACLAHHYADARHVDVTPLADTQAITHLDPQALNGTNDMRLGVFVNAEHGQVLLSAVFDNLGKGASGAAVQNLDLMLGAADVAKAA.

Cys-117 is an active-site residue.

Belongs to the NAGSA dehydrogenase family. Type 2 subfamily.

It is found in the cytoplasm. The enzyme catalyses N-acetyl-L-glutamate 5-semialdehyde + phosphate + NADP(+) = N-acetyl-L-glutamyl 5-phosphate + NADPH + H(+). The protein operates within amino-acid biosynthesis; L-arginine biosynthesis; N(2)-acetyl-L-ornithine from L-glutamate: step 3/4. In terms of biological role, catalyzes the NADPH-dependent reduction of N-acetyl-5-glutamyl phosphate to yield N-acetyl-L-glutamate 5-semialdehyde. The sequence is that of N-acetyl-gamma-glutamyl-phosphate reductase from Burkholderia lata (strain ATCC 17760 / DSM 23089 / LMG 22485 / NCIMB 9086 / R18194 / 383).